The chain runs to 317 residues: Methionyl-tRNA formyltransferase (317 aa).

(6S)-5,6,7,8-tetrahydrofolate is bound at residue 110–113 (SLLP).

The protein belongs to the Fmt family.

It carries out the reaction L-methionyl-tRNA(fMet) + (6R)-10-formyltetrahydrofolate = N-formyl-L-methionyl-tRNA(fMet) + (6S)-5,6,7,8-tetrahydrofolate + H(+). Its function is as follows. Attaches a formyl group to the free amino group of methionyl-tRNA(fMet). The formyl group appears to play a dual role in the initiator identity of N-formylmethionyl-tRNA by promoting its recognition by IF2 and preventing the misappropriation of this tRNA by the elongation apparatus. In Bacillus pumilus (strain SAFR-032), this protein is Methionyl-tRNA formyltransferase.